The primary structure comprises 154 residues: Large ribosomal subunit protein uL13 (154 aa).

The protein belongs to the universal ribosomal protein uL13 family. As to quaternary structure, part of the 50S ribosomal subunit.

Its function is as follows. This protein is one of the early assembly proteins of the 50S ribosomal subunit, although it is not seen to bind rRNA by itself. It is important during the early stages of 50S assembly. The polypeptide is Large ribosomal subunit protein uL13 (Rhizobium leguminosarum bv. trifolii (strain WSM2304)).